The primary structure comprises 157 residues: Transcription elongation factor GreA (157 aa).

Belongs to the GreA/GreB family.

Necessary for efficient RNA polymerase transcription elongation past template-encoded arresting sites. The arresting sites in DNA have the property of trapping a certain fraction of elongating RNA polymerases that pass through, resulting in locked ternary complexes. Cleavage of the nascent transcript by cleavage factors such as GreA or GreB allows the resumption of elongation from the new 3'terminus. GreA releases sequences of 2 to 3 nucleotides. The chain is Transcription elongation factor GreA from Caulobacter sp. (strain K31).